Consider the following 377-residue polypeptide: Queuine tRNA-ribosyltransferase (377 aa).

D94 acts as the Proton acceptor in catalysis. Substrate-binding positions include 94 to 98, D148, Q191, and G218; that span reads DSGGF. The tract at residues 249–255 is RNA binding; it reads GVGTPDD. Catalysis depends on D268, which acts as the Nucleophile. The RNA binding; important for wobble base 34 recognition stretch occupies residues 273 to 277; it reads TRAGR.

It belongs to the queuine tRNA-ribosyltransferase family. As to quaternary structure, homodimer. Within each dimer, one monomer is responsible for RNA recognition and catalysis, while the other monomer binds to the replacement base PreQ1.

It catalyses the reaction 7-aminomethyl-7-carbaguanine + guanosine(34) in tRNA = 7-aminomethyl-7-carbaguanosine(34) in tRNA + guanine. It functions in the pathway tRNA modification; tRNA-queuosine biosynthesis. Functionally, catalyzes the base-exchange of a guanine (G) residue with the queuine precursor 7-aminomethyl-7-deazaguanine (PreQ1) at position 34 (anticodon wobble position) in tRNAs with GU(N) anticodons (tRNA-Asp, -Asn, -His and -Tyr). Catalysis occurs through a double-displacement mechanism. The nucleophile active site attacks the C1' of nucleotide 34 to detach the guanine base from the RNA, forming a covalent enzyme-RNA intermediate. The proton acceptor active site deprotonates the incoming PreQ1, allowing a nucleophilic attack on the C1' of the ribose to form the product. After dissociation, two additional enzymatic reactions on the tRNA convert PreQ1 to queuine (Q), resulting in the hypermodified nucleoside queuosine (7-(((4,5-cis-dihydroxy-2-cyclopenten-1-yl)amino)methyl)-7-deazaguanosine). The protein is Queuine tRNA-ribosyltransferase of Brucella suis biovar 1 (strain 1330).